We begin with the raw amino-acid sequence, 484 residues long: UDP-N-acetylmuramate--L-alanine ligase (484 aa).

Position 128–134 (128–134) interacts with ATP; it reads GTHGKTT.

Belongs to the MurCDEF family.

It is found in the cytoplasm. It carries out the reaction UDP-N-acetyl-alpha-D-muramate + L-alanine + ATP = UDP-N-acetyl-alpha-D-muramoyl-L-alanine + ADP + phosphate + H(+). It functions in the pathway cell wall biogenesis; peptidoglycan biosynthesis. Its function is as follows. Cell wall formation. This chain is UDP-N-acetylmuramate--L-alanine ligase, found in Shewanella loihica (strain ATCC BAA-1088 / PV-4).